The following is a 261-amino-acid chain: tRNA pseudouridine synthase A (261 aa).

Residue aspartate 52 is the Nucleophile of the active site. Tyrosine 110 provides a ligand contact to substrate.

Belongs to the tRNA pseudouridine synthase TruA family. Homodimer.

It carries out the reaction uridine(38/39/40) in tRNA = pseudouridine(38/39/40) in tRNA. In terms of biological role, formation of pseudouridine at positions 38, 39 and 40 in the anticodon stem and loop of transfer RNAs. The chain is tRNA pseudouridine synthase A from Blochmanniella pennsylvanica (strain BPEN).